We begin with the raw amino-acid sequence, 165 residues long: MPRIAFYPGSFDPITNGHLDVVRHAVPLCDRLVVAIGVHPGKKPLFSTEERLRMLEDVCGPVATQAGCVLEAVTFDDLSVTAARKHGATIMIRGLRDGTDLDYEMQLAGMNEAMAPEVHTVFLPASPMVRPITATLVRQIAGMGGDVSTFVPPLVASLLKAKFAG.

Ser-10 is a binding site for substrate. Residues Ser-10–Phe-11 and His-18 contribute to the ATP site. Positions 42, 79, and 93 each coordinate substrate. ATP contacts are provided by residues Gly-94–Arg-96, Glu-104, and Val-129–Thr-135.

The protein belongs to the bacterial CoaD family. As to quaternary structure, homohexamer. It depends on Mg(2+) as a cofactor.

The protein resides in the cytoplasm. The enzyme catalyses (R)-4'-phosphopantetheine + ATP + H(+) = 3'-dephospho-CoA + diphosphate. The protein operates within cofactor biosynthesis; coenzyme A biosynthesis; CoA from (R)-pantothenate: step 4/5. Functionally, reversibly transfers an adenylyl group from ATP to 4'-phosphopantetheine, yielding dephospho-CoA (dPCoA) and pyrophosphate. In Bradyrhizobium diazoefficiens (strain JCM 10833 / BCRC 13528 / IAM 13628 / NBRC 14792 / USDA 110), this protein is Phosphopantetheine adenylyltransferase.